Reading from the N-terminus, the 466-residue chain is tRNA modification GTPase MnmE (466 aa).

The (6S)-5-formyl-5,6,7,8-tetrahydrofolate site is built by Arg22, Glu87, and Arg126. Residues 222 to 382 (GWRTVIVGRP…LTELIRRMVY (161 aa)) enclose the TrmE-type G domain. Residue Asn232 participates in K(+) binding. GTP is bound by residues 232–237 (NVGKSS), 251–257 (TEIPGTT), and 276–279 (DTAG). Ser236 is a Mg(2+) binding site. K(+) contacts are provided by Thr251, Ile253, and Thr256. Position 257 (Thr257) interacts with Mg(2+). Lys466 provides a ligand contact to (6S)-5-formyl-5,6,7,8-tetrahydrofolate.

It belongs to the TRAFAC class TrmE-Era-EngA-EngB-Septin-like GTPase superfamily. TrmE GTPase family. As to quaternary structure, homodimer. Heterotetramer of two MnmE and two MnmG subunits. It depends on K(+) as a cofactor.

It is found in the cytoplasm. Exhibits a very high intrinsic GTPase hydrolysis rate. Involved in the addition of a carboxymethylaminomethyl (cmnm) group at the wobble position (U34) of certain tRNAs, forming tRNA-cmnm(5)s(2)U34. The sequence is that of tRNA modification GTPase MnmE from Heliobacterium modesticaldum (strain ATCC 51547 / Ice1).